The primary structure comprises 199 residues: Large ribosomal subunit protein mL51 (199 aa).

The transit peptide at 1 to 15 directs the protein to the mitochondrion; the sequence is MNSNSLSRFTSIVRT.

The protein belongs to the mitochondrion-specific ribosomal protein mL51 family. As to quaternary structure, component of the mitochondrial ribosome large subunit (39S) which comprises a 16S rRNA and about 50 distinct proteins.

It localises to the mitochondrion. This is Large ribosomal subunit protein mL51 (mrpl-51) from Caenorhabditis elegans.